A 727-amino-acid polypeptide reads, in one-letter code: NADH-ubiquinone oxidoreductase 75 kDa subunit, mitochondrial (727 aa).

The N-terminal 23 residues, 1–23 (MLRIPVRKALVVLSKSPKGCVRT), are a transit peptide targeting the mitochondrion. Positions 30–108 (NLIEVFVDGQ…GWNILTNSKK (79 aa)) constitute a 2Fe-2S ferredoxin-type domain. [2Fe-2S] cluster contacts are provided by C64, C75, and C78. N6-acetyllysine is present on K84. C92 lines the [2Fe-2S] cluster pocket. A 4Fe-4S His(Cys)3-ligated-type domain is found at 108-147 (KSKKAREGVMEFLLANHPLDCPICDQGGECDLQDQSMMFG). [4Fe-4S] cluster-binding residues include H124, C128, C131, C137, C176, C179, C182, and C226. Residues 245-301 (TRKTESIDVMDAVGSNIVVSTRTGEVMRILPRMHEDINEEWISDKTRFAYDGLKRQR) enclose the 4Fe-4S Mo/W bis-MGD-type domain. N6-acetyllysine occurs at positions 467, 499, and 709.

The protein belongs to the complex I 75 kDa subunit family. As to quaternary structure, core subunit of respiratory chain NADH dehydrogenase (Complex I) which is composed of 45 different subunits. This is the largest subunit of complex I and it is a component of the iron-sulfur (IP) fragment of the enzyme. Complex I associates with ubiquinol-cytochrome reductase complex (Complex III) to form supercomplexes. Interacts with MDM2 and AKAP1. Requires [2Fe-2S] cluster as cofactor. It depends on [4Fe-4S] cluster as a cofactor.

It is found in the mitochondrion inner membrane. The catalysed reaction is a ubiquinone + NADH + 5 H(+)(in) = a ubiquinol + NAD(+) + 4 H(+)(out). Functionally, core subunit of the mitochondrial membrane respiratory chain NADH dehydrogenase (Complex I) which catalyzes electron transfer from NADH through the respiratory chain, using ubiquinone as an electron acceptor. Essential for catalysing the entry and efficient transfer of electrons within complex I. Plays a key role in the assembly and stability of complex I and participates in the association of complex I with ubiquinol-cytochrome reductase complex (Complex III) to form supercomplexes. The polypeptide is NADH-ubiquinone oxidoreductase 75 kDa subunit, mitochondrial (NDUFS1) (Pan troglodytes (Chimpanzee)).